The sequence spans 235 residues: Phosphatidylserine decarboxylase proenzyme (235 aa).

Catalysis depends on serine 204, which acts as the Schiff-base intermediate with substrate; via pyruvic acid. Serine 204 is subject to Pyruvic acid (Ser); by autocatalysis.

It belongs to the phosphatidylserine decarboxylase family. PSD-A subfamily. In terms of assembly, heterodimer of a large membrane-associated beta subunit and a small pyruvoyl-containing alpha subunit. It depends on pyruvate as a cofactor. Post-translationally, is synthesized initially as an inactive proenzyme. Formation of the active enzyme involves a self-maturation process in which the active site pyruvoyl group is generated from an internal serine residue via an autocatalytic post-translational modification. Two non-identical subunits are generated from the proenzyme in this reaction, and the pyruvate is formed at the N-terminus of the alpha chain, which is derived from the carboxyl end of the proenzyme. The post-translation cleavage follows an unusual pathway, termed non-hydrolytic serinolysis, in which the side chain hydroxyl group of the serine supplies its oxygen atom to form the C-terminus of the beta chain, while the remainder of the serine residue undergoes an oxidative deamination to produce ammonia and the pyruvoyl prosthetic group on the alpha chain.

The protein resides in the cell membrane. It carries out the reaction a 1,2-diacyl-sn-glycero-3-phospho-L-serine + H(+) = a 1,2-diacyl-sn-glycero-3-phosphoethanolamine + CO2. It functions in the pathway phospholipid metabolism; phosphatidylethanolamine biosynthesis; phosphatidylethanolamine from CDP-diacylglycerol: step 2/2. In terms of biological role, catalyzes the formation of phosphatidylethanolamine (PtdEtn) from phosphatidylserine (PtdSer). This chain is Phosphatidylserine decarboxylase proenzyme, found in Mycobacterium sp. (strain JLS).